Consider the following 500-residue polypeptide: Glycerol kinase (500 aa).

Threonine 13 contributes to the ADP binding site. Positions 13, 14, and 15 each coordinate ATP. Threonine 13 provides a ligand contact to sn-glycerol 3-phosphate. Arginine 17 is an ADP binding site. Residues arginine 83, glutamate 84, tyrosine 135, and aspartate 244 each contribute to the sn-glycerol 3-phosphate site. Glycerol contacts are provided by arginine 83, glutamate 84, tyrosine 135, aspartate 244, and glutamine 245. ADP is bound by residues threonine 266, glycine 309, glycine 410, and asparagine 414. ATP contacts are provided by threonine 266, glycine 309, and glycine 410.

The protein belongs to the FGGY kinase family.

The catalysed reaction is glycerol + ATP = sn-glycerol 3-phosphate + ADP + H(+). Its pathway is polyol metabolism; glycerol degradation via glycerol kinase pathway; sn-glycerol 3-phosphate from glycerol: step 1/1. Inhibited by fructose 1,6-bisphosphate (FBP). Functionally, key enzyme in the regulation of glycerol uptake and metabolism. Catalyzes the phosphorylation of glycerol to yield sn-glycerol 3-phosphate. In Chromobacterium violaceum (strain ATCC 12472 / DSM 30191 / JCM 1249 / CCUG 213 / NBRC 12614 / NCIMB 9131 / NCTC 9757 / MK), this protein is Glycerol kinase.